The chain runs to 445 residues: KICSTOR subunit 2 (445 aa).

It belongs to the KICS2 family. In terms of assembly, part of the KICSTOR complex composed of KPTN, ITFG2, KICS2 and SZT2. SZT2 probably serves as a link between the other three proteins in the KICSTOR complex and may mediate the direct interaction with the GATOR complex via GATOR1. The KICSTOR complex interacts directly with the GATOR1 complex and most probably indirectly with the GATOR2 complex in an amino acid-independent manner.

Its subcellular location is the lysosome membrane. Its function is as follows. As part of the KICSTOR complex functions in the amino acid-sensing branch of the TORC1 signaling pathway. Recruits, in an amino acid-independent manner, the GATOR1 complex to the lysosomal membranes and allows its interaction with GATOR2 and the RAG GTPases. Functions upstream of the RAG GTPases and is required to negatively regulate mTORC1 signaling in absence of amino acids. In absence of the KICSTOR complex mTORC1 is constitutively localized to the lysosome and activated. The KICSTOR complex is also probably involved in the regulation of mTORC1 by glucose. The polypeptide is KICSTOR subunit 2 (Mus musculus (Mouse)).